The following is a 482-amino-acid chain: MSTSSHACPVPAVRGHMTHYPAAPYPLLFPPVIRGLSLPPLHGLHGHPPPSGCSTPSPASVGQACQRTTGGSQFAASTKWTPSLNAAIETQSTSSEELVPSPPSPLPPPRVYKPCFVCQDKSSGYHYGVSACEGCKGFFRRSIQKNMIYTCHRDKNCVINKVTRNRCQYCRLQKCFEVGMSKESVRNDRNKKKKEPSKQECTESYEMTAELDDLTEKIRKAHQETFPSLCQLGKYTTNSSADHRVRLDLGLWDKFSELATKCIIKIVEFAKRLPGFTGLTIADQITLLKAACLDILILRICTRYTPEQDTMTFSDGLTLNRTQMHNAGFGPLTDLVFTFANQLLPLEMDDTETGLLSAICLICGDRQDLEEPTKVDKLQEPLLEALKIYIRKRRPSKPHMFPKILMKITDLRSISAKGAERVITLKMEIPGSMPPLIQEMLENSEGHEPLTPSSSGNIAEHSPSVSPSSVENSGVSQSPLLQ.

A modulating region spans residues 1-114 (MSTSSHACPV…PLPPPRVYKP (114 aa)). S104 carries the phosphoserine modification. NR C4-type zinc fingers lie at residues 115-135 (CFVC…CEGC) and 151-175 (CHRD…LQKC). The segment at residues 115-180 (CFVCQDKSSG…RLQKCFEVGM (66 aa)) is a DNA-binding region (nuclear receptor). Residues 181 to 209 (SKESVRNDRNKKKKEPSKQECTESYEMTA) form a hinge region. An NR LBD domain is found at 210–444 (ELDDLTEKIR…PLIQEMLENS (235 aa)). The disordered stretch occupies residues 443–482 (NSEGHEPLTPSSSGNIAEHSPSVSPSSVENSGVSQSPLLQ). The span at 462–482 (SPSVSPSSVENSGVSQSPLLQ) shows a compositional bias: low complexity.

This sequence belongs to the nuclear hormone receptor family. NR1 subfamily. In terms of assembly, homodimer. Heterodimer; with a RXR molecule. Binds DNA preferentially as a RAR/RXR heterodimer. Heterodimerizes (via NR LBD) with RXRA. Interacts weakly with NCOR2.

The protein localises to the nucleus. It localises to the cytoplasm. Functionally, receptor for retinoic acid. Retinoic acid receptors bind as heterodimers to their target response elements in response to their ligands, all-trans or 9-cis retinoic acid, and regulate gene expression in various biological processes. The RAR/RXR heterodimers bind to the retinoic acid response elements (RARE) composed of tandem 5'-AGGTCA-3' sites known as DR1-DR5. In the absence of ligand, acts mainly as an activator of gene expression due to weak binding to corepressors. The RXRA/RARB heterodimer can act as a repressor on the DR1 element and as an activator on the DR5 element. In concert with RARG, required for skeletal growth, matrix homeostasis and growth plate function. This chain is Retinoic acid receptor beta (Rarb), found in Mus musculus (Mouse).